Consider the following 422-residue polypeptide: Isocitrate dehydrogenase [NADP] (422 aa).

Thr94 contacts NADP(+). Ser103, Asn105, Arg109, Arg119, and Arg143 together coordinate D-threo-isocitrate. Asp310 provides a ligand contact to Mg(2+). NADP(+) is bound by residues 344–350 (HGTAPKY), Asn357, Tyr396, and Arg400.

It belongs to the isocitrate and isopropylmalate dehydrogenases family. In terms of assembly, homodimer. Mg(2+) is required as a cofactor. Requires Mn(2+) as cofactor.

It catalyses the reaction D-threo-isocitrate + NADP(+) = 2-oxoglutarate + CO2 + NADPH. Its function is as follows. Catalyzes the oxidative decarboxylation of isocitrate to 2-oxoglutarate and carbon dioxide with the concomitant reduction of NADP(+). This is Isocitrate dehydrogenase [NADP] (icd) from Staphylococcus aureus (strain MSSA476).